A 417-amino-acid polypeptide reads, in one-letter code: Zinc-finger homeodomain protein 4 (417 aa).

Over residues 1-12 (MVSILQLQTRTE) the composition is skewed to polar residues. 2 disordered regions span residues 1 to 22 (MVSI…ASAA) and 31 to 50 (RQQQ…FQER). The segment covering 13–22 (ASPASSASAA) has biased composition (low complexity). Acidic residues predominate over residues 36–46 (QEGEEEEEEFE). The ZF-HD dimerization-type; degenerate zinc-finger motif lies at 145 to 194 (YRECLKNHAAAIGGNATDGCGEFMPSGEEGSLEALKCSACGCHRNFHRKE). Disordered stretches follow at residues 281-309 (DEMD…FRTK) and 361-417 (NLAK…LKLE). Over residues 286 to 298 (SGGGGGVGRGGGS) the composition is skewed to gly residues. The segment at residues 303–366 (KKRFRTKFTA…NNKHNLAKKP (64 aa)) is a DNA-binding region (homeobox). Positions 368–417 (PSSPPPPPQIPPMSMPPSPPPPQIPPMSMPPSPPPMPMPMPPSPPQLKLE) are enriched in pro residues.

In terms of assembly, homo- and heterodimer with other ZFHD proteins.

It is found in the nucleus. In terms of biological role, putative transcription factor. The polypeptide is Zinc-finger homeodomain protein 4 (ZHD4) (Oryza sativa subsp. japonica (Rice)).